Reading from the N-terminus, the 720-residue chain is Protein O-mannosyl-transferase 1 (720 aa).

Transmembrane regions (helical) follow at residues 7–27, 67–87, 105–125, 127–147, 150–170, 178–198, 201–221, and 239–259; these read PVSVTVEINVLLLAVTALALF, FGHMILALGAYLGGFDGNFVW, LIPALAGSFCVPLAYLVVVEL, YSHFSALGACALLLMENSLIV, RFMLLESVLIFFLLLAVLSYL, SFFKWFWLVICGVSCAFGIGV, MGMFTYFLLLSLAAVHTWQLI, and FLALVVLPVIMYLGFFYIHLT. 3 MIR domains span residues 291–354, 365–422, and 426–486; these read PLDV…IKDP, PKPV…VDIV, and SEKE…VEEH. 4 helical membrane-spanning segments follow: residues 570-590, 609-629, 633-653, and 670-690; these read IVTWTTGNITLVVYCLLFLTY, LVLAGVVCLGGWAVNYLPFFL, TLFLYHYLPALTFKILQIPIV, and AFGGVILAVLCSVYMSYHSLS.

Belongs to the glycosyltransferase 39 family. As to expression, widely expressed. Has particularly strong expression in testis, ovary, brain, liver and heart.

The protein localises to the endoplasmic reticulum membrane. It catalyses the reaction a di-trans,poly-cis-dolichyl beta-D-mannosyl phosphate + L-seryl-[protein] = 3-O-(alpha-D-mannosyl)-L-seryl-[protein] + a di-trans,poly-cis-dolichyl phosphate + H(+). The enzyme catalyses a di-trans,poly-cis-dolichyl beta-D-mannosyl phosphate + L-threonyl-[protein] = 3-O-(alpha-D-mannosyl)-L-threonyl-[protein] + a di-trans,poly-cis-dolichyl phosphate + H(+). The protein operates within protein modification; protein glycosylation. Transfers mannosyl residues to the hydroxyl group of serine or threonine residues. Coexpression of both POMT1 and POMT2 is necessary for enzyme activity, expression of either POMT1 or POMT2 alone is insufficient. In Danio rerio (Zebrafish), this protein is Protein O-mannosyl-transferase 1.